Consider the following 230-residue polypeptide: MEAIILVGGLGKRLRSVVSELPKPMAPIDNKPFLHYIFWYLNKQGIDQVILSTGYKHEMIETYFGNRYHGISINYSIEQEPLGTGGAIKKAFRKTTEENVVIINGDTLFLVDLRKMFERHISFKADLTLALKPMKEFERYGTVITRDSRVIAFKEKGYHSEGNINGGVYIANKAIFECESLSEKFSFEQDFLEKEFLQKKFYGFISDAYFIDIGIPDDYRKAQKELQHYI.

It belongs to the D-alpha-D-heptose-1-P guanylyltransferase family.

It catalyses the reaction D-glycero-alpha-D-manno-heptose 1-phosphate + GTP + H(+) = GDP-D-glycero-alpha-D-manno-heptose + diphosphate. It participates in nucleotide-sugar biosynthesis; GDP-D-glycero-alpha-D-manno-heptose biosynthesis; GDP-D-glycero-alpha-D-manno-heptose from D-glycero-alpha-D-manno-heptose 7-phosphate: step 3/3. The protein operates within cell surface structure biogenesis; S-layer biogenesis. Functionally, catalyzes the GDP transfer from GTP to D-glycero-alpha-D-manno-heptose 1-phosphate, yielding GDP-D-alpha-D-heptose. Cannot use ATP, CTP, dTTP or UTP as substrate. This Aneurinibacillus thermoaerophilus protein is D-glycero-alpha-D-manno-heptose 1-phosphate guanylyltransferase (hddC).